Here is a 270-residue protein sequence, read N- to C-terminus: Glucosamine-6-phosphate deaminase (270 aa).

Asp68 (proton acceptor; for enolization step) is an active-site residue. Asp145 (for ring-opening step) is an active-site residue. His147 functions as the Proton acceptor; for ring-opening step in the catalytic mechanism. Glu152 serves as the catalytic For ring-opening step.

This sequence belongs to the glucosamine/galactosamine-6-phosphate isomerase family. NagB subfamily.

The enzyme catalyses alpha-D-glucosamine 6-phosphate + H2O = beta-D-fructose 6-phosphate + NH4(+). It participates in amino-sugar metabolism; N-acetylneuraminate degradation; D-fructose 6-phosphate from N-acetylneuraminate: step 5/5. In terms of biological role, catalyzes the reversible isomerization-deamination of glucosamine 6-phosphate (GlcN6P) to form fructose 6-phosphate (Fru6P) and ammonium ion. The polypeptide is Glucosamine-6-phosphate deaminase (Bifidobacterium longum subsp. infantis (strain ATCC 15697 / DSM 20088 / JCM 1222 / NCTC 11817 / S12)).